The sequence spans 203 residues: MIPNRDTIEQKQLGWVELITGCMFAGKTEEFIKRLRRHAFAKRNVIAFKPVIDTRYAVNEVASHAGTLLPSIPVNSTAELKEKLEAKILEKKVDVVGIDEIQFFDEAIVDYIEELADRGIIVIVTGLDKDFRSQPFKNVDRILPLAEMVDKLTAICQKCGNFANRTQRIIDGKPADWNSPLILVDGNDSYEARCRNCYQIEKG.

Residues G21–T28 and D99–Q102 contribute to the ATP site. The Proton acceptor role is filled by E100. C156, C159, C194, and C197 together coordinate Zn(2+).

This sequence belongs to the thymidine kinase family. In terms of assembly, homotetramer.

It is found in the cytoplasm. It catalyses the reaction thymidine + ATP = dTMP + ADP + H(+). This chain is Thymidine kinase, found in Mesoplasma florum (strain ATCC 33453 / NBRC 100688 / NCTC 11704 / L1) (Acholeplasma florum).